Here is a 78-residue protein sequence, read N- to C-terminus: Putative snRNP Sm-like protein (78 aa).

Residues Arg-4–Gly-76 form the Sm domain.

The protein belongs to the snRNP Sm proteins family.

The sequence is that of Putative snRNP Sm-like protein from Thermococcus onnurineus (strain NA1).